A 162-amino-acid chain; its full sequence is SsrA-binding protein (162 aa).

This sequence belongs to the SmpB family.

Its subcellular location is the cytoplasm. Functionally, required for rescue of stalled ribosomes mediated by trans-translation. Binds to transfer-messenger RNA (tmRNA), required for stable association of tmRNA with ribosomes. tmRNA and SmpB together mimic tRNA shape, replacing the anticodon stem-loop with SmpB. tmRNA is encoded by the ssrA gene; the 2 termini fold to resemble tRNA(Ala) and it encodes a 'tag peptide', a short internal open reading frame. During trans-translation Ala-aminoacylated tmRNA acts like a tRNA, entering the A-site of stalled ribosomes, displacing the stalled mRNA. The ribosome then switches to translate the ORF on the tmRNA; the nascent peptide is terminated with the 'tag peptide' encoded by the tmRNA and targeted for degradation. The ribosome is freed to recommence translation, which seems to be the essential function of trans-translation. This is SsrA-binding protein from Buchnera aphidicola subsp. Acyrthosiphon pisum (strain 5A).